An 88-amino-acid polypeptide reads, in one-letter code: HssA/B-like protein 61 (88 aa).

Belongs to the hssA/B family.

This chain is HssA/B-like protein 61 (hssl61), found in Dictyostelium discoideum (Social amoeba).